Here is a 164-residue protein sequence, read N- to C-terminus: UPF0304 protein YfbU (164 aa).

It belongs to the UPF0304 family.

This Escherichia coli O139:H28 (strain E24377A / ETEC) protein is UPF0304 protein YfbU.